The chain runs to 409 residues: Elongation factor Tu (409 aa).

Residues Lys-10–Glu-214 enclose the tr-type G domain. Residues Gly-19–Thr-26 form a G1 region. Gly-19–Thr-26 contacts GTP. Mg(2+) is bound at residue Thr-26. Residues Gly-60 to Asn-64 are G2. The tract at residues Asp-81–Gly-84 is G3. Residues Asp-81–His-85 and Asn-136–Asp-139 each bind GTP. The tract at residues Asn-136–Asp-139 is G4. Positions Ser-174–Leu-176 are G5.

The protein belongs to the TRAFAC class translation factor GTPase superfamily. Classic translation factor GTPase family. EF-Tu/EF-1A subfamily. As to quaternary structure, monomer.

Its subcellular location is the cytoplasm. It carries out the reaction GTP + H2O = GDP + phosphate + H(+). Its function is as follows. GTP hydrolase that promotes the GTP-dependent binding of aminoacyl-tRNA to the A-site of ribosomes during protein biosynthesis. The sequence is that of Elongation factor Tu from Synechococcus elongatus (strain ATCC 33912 / PCC 7942 / FACHB-805) (Anacystis nidulans R2).